We begin with the raw amino-acid sequence, 420 residues long: 3-isopropylmalate dehydratase large subunit (420 aa).

[4Fe-4S] cluster is bound by residues C300, C360, and C363.

The protein belongs to the aconitase/IPM isomerase family. LeuC type 2 subfamily. As to quaternary structure, heterodimer of LeuC and LeuD. It depends on [4Fe-4S] cluster as a cofactor.

It carries out the reaction (2R,3S)-3-isopropylmalate = (2S)-2-isopropylmalate. The protein operates within amino-acid biosynthesis; L-leucine biosynthesis; L-leucine from 3-methyl-2-oxobutanoate: step 2/4. Functionally, catalyzes the isomerization between 2-isopropylmalate and 3-isopropylmalate, via the formation of 2-isopropylmaleate. This Syntrophus aciditrophicus (strain SB) protein is 3-isopropylmalate dehydratase large subunit.